The following is a 326-amino-acid chain: DNA-directed RNA polymerase subunit alpha (326 aa).

Residues 1–232 (MQSATEFLKP…SQLSVFADLE (232 aa)) are alpha N-terminal domain (alpha-NTD). The alpha C-terminal domain (alpha-CTD) stretch occupies residues 246 to 326 (VDPLLLRPVD…NWPPAGLERP (81 aa)).

It belongs to the RNA polymerase alpha chain family. As to quaternary structure, homodimer. The RNAP catalytic core consists of 2 alpha, 1 beta, 1 beta' and 1 omega subunit. When a sigma factor is associated with the core the holoenzyme is formed, which can initiate transcription.

It catalyses the reaction RNA(n) + a ribonucleoside 5'-triphosphate = RNA(n+1) + diphosphate. Functionally, DNA-dependent RNA polymerase catalyzes the transcription of DNA into RNA using the four ribonucleoside triphosphates as substrates. This Thiobacillus denitrificans (strain ATCC 25259 / T1) protein is DNA-directed RNA polymerase subunit alpha.